A 457-amino-acid chain; its full sequence is Siroheme synthase (457 aa).

Residues 1 to 204 are precorrin-2 dehydrogenase /sirohydrochlorin ferrochelatase; that stretch reads MEIFPISLKL…DNLDIANQMM (204 aa). Residues 22–23 and 43–44 each bind NAD(+); these read HI and PD. Residue Ser129 is modified to Phosphoserine. Residues 216 to 457 are uroporphyrinogen-III C-methyltransferase; sequence GEVYLVGAGP…VSLREQLQWL (242 aa). Position 225 (Pro225) interacts with S-adenosyl-L-methionine. Asp248 functions as the Proton acceptor in the catalytic mechanism. Catalysis depends on Lys270, which acts as the Proton donor. Residues 301–303, Ile306, 331–332, Met383, and Gly412 contribute to the S-adenosyl-L-methionine site; these read GGD and TA.

The protein in the N-terminal section; belongs to the precorrin-2 dehydrogenase / sirohydrochlorin ferrochelatase family. In the C-terminal section; belongs to the precorrin methyltransferase family.

It carries out the reaction uroporphyrinogen III + 2 S-adenosyl-L-methionine = precorrin-2 + 2 S-adenosyl-L-homocysteine + H(+). It catalyses the reaction precorrin-2 + NAD(+) = sirohydrochlorin + NADH + 2 H(+). The enzyme catalyses siroheme + 2 H(+) = sirohydrochlorin + Fe(2+). It participates in cofactor biosynthesis; adenosylcobalamin biosynthesis; precorrin-2 from uroporphyrinogen III: step 1/1. The protein operates within cofactor biosynthesis; adenosylcobalamin biosynthesis; sirohydrochlorin from precorrin-2: step 1/1. It functions in the pathway porphyrin-containing compound metabolism; siroheme biosynthesis; precorrin-2 from uroporphyrinogen III: step 1/1. Its pathway is porphyrin-containing compound metabolism; siroheme biosynthesis; siroheme from sirohydrochlorin: step 1/1. It participates in porphyrin-containing compound metabolism; siroheme biosynthesis; sirohydrochlorin from precorrin-2: step 1/1. Multifunctional enzyme that catalyzes the SAM-dependent methylations of uroporphyrinogen III at position C-2 and C-7 to form precorrin-2 via precorrin-1. Then it catalyzes the NAD-dependent ring dehydrogenation of precorrin-2 to yield sirohydrochlorin. Finally, it catalyzes the ferrochelation of sirohydrochlorin to yield siroheme. This Acinetobacter baylyi (strain ATCC 33305 / BD413 / ADP1) protein is Siroheme synthase.